We begin with the raw amino-acid sequence, 792 residues long: MAAASGEKEEEEKKLQERAPIRRTAWMLANFVVLFLLLALLVRRATAADAEERGVGGAAWRVAFACEAWFAFVWLLNMNAKWSPARFDTYPENLAGRCGAAHRPRKSSCISGHLDLMRRQCALMQDRRAAGGRHVRDDGGPGARAAGGDGEQGALAARRRLLPGRRRRRRRRRLACYVSDDGCSPVTYYALREAAGFARTWVPFCRRHGVAVRAPFRYFASAPEFGPADRKFLDDWTFMKSEYDKLVRRIEDADETTLLRQGGGEFAEFMDAKRTNHRAIVKVIWDNNSKNRIGEEGGFPHLIYVSREKSPGHHHHYKAGAMNALTRVSAVMTNAPIMLNVDCDMFANDPQVVLHAMCLLLGFDDEISSGFVQVPQSFYGDLKDDPFGNKLEVIYKGLFYGGTGCFHCRKAIYGIEPDSIVVGREGAAGSPSYKELQFKFESSEELKESARYIISGDMSGEPIVDISSHIEVAKEVSSCNYESGTHWGLEVGWAYGSMTEDILTGQRIHAAGWRSAKLETEPPAFLGCAPTGGPACLTQFKRWATGLFEILISQNNPLLLSIFKHLQFRQCLAYLTLYVWAVRGFVELCYELLVPYCLLTNQSFLSKASENCFNITLALFLTYNTYNFVEYMECGLSVRAWWNNHRMQRIISASAWLLAFFTVLLKTIGLSETVFEVTRKEKSTSDGNGQNDEVDPERFTFDASPVFIPVTALTMLNIVAITIGTWRAVFGTTEDVPGGPGISEFMSCGWLLLCLLPFVRGLVGKGSYGIPWSVKLKASLLVALFLFCSNRN.

2 consecutive transmembrane segments (helical) span residues 25-45 and 55-75; these read AWMLANFVVLFLLLALLVRRA and VGGAAWRVAFACEAWFAFVWL. A disordered region spans residues 132-154; that stretch reads GRHVRDDGGPGARAAGGDGEQGA. The span at 140–151 shows a compositional bias: gly residues; the sequence is GPGARAAGGDGE. Active-site residues include aspartate 181 and aspartate 501. The next 6 membrane-spanning stretches (helical) occupy residues 579–599, 613–632, 650–670, 706–726, 739–759, and 768–788; these read VWAVRGFVELCYELLVPYCLL, FNITLALFLTYNTYNFVEYM, IISASAWLLAFFTVLLKTIGL, VFIPVTALTMLNIVAITIGTW, GPGISEFMSCGWLLLCLLPFV, and YGIPWSVKLKASLLVALFLFC.

This sequence belongs to the glycosyltransferase 2 family. Plant cellulose synthase-like H subfamily.

The protein localises to the golgi apparatus membrane. Functionally, thought to be a Golgi-localized beta-glycan synthase that polymerize the backbones of noncellulosic polysaccharides (hemicelluloses) of plant cell wall. This Oryza sativa subsp. japonica (Rice) protein is Putative cellulose synthase-like protein H3 (CSLH3).